The chain runs to 184 residues: Photosystem I assembly protein Ycf4 (184 aa).

2 helical membrane-spanning segments follow: residues 22–42 and 57–77; these read FCWA…GTSS and IIFF…LFIS.

It belongs to the Ycf4 family.

It localises to the plastid. Its subcellular location is the chloroplast thylakoid membrane. In terms of biological role, seems to be required for the assembly of the photosystem I complex. In Capsella bursa-pastoris (Shepherd's purse), this protein is Photosystem I assembly protein Ycf4.